The sequence spans 296 residues: NAD kinase (296 aa).

Residue D73 is the Proton acceptor of the active site. NAD(+)-binding positions include 73–74 (DG), K78, 151–152 (NE), R178, D180, and 191–196 (TAHAMS).

This sequence belongs to the NAD kinase family. A divalent metal cation serves as cofactor.

Its subcellular location is the cytoplasm. It carries out the reaction NAD(+) + ATP = ADP + NADP(+) + H(+). In terms of biological role, involved in the regulation of the intracellular balance of NAD and NADP, and is a key enzyme in the biosynthesis of NADP. Catalyzes specifically the phosphorylation on 2'-hydroxyl of the adenosine moiety of NAD to yield NADP. The sequence is that of NAD kinase from Francisella tularensis subsp. mediasiatica (strain FSC147).